We begin with the raw amino-acid sequence, 391 residues long: Elongation factor Tu 2 (391 aa).

Residues Lys-10–Glu-201 enclose the tr-type G domain. The segment at Gly-19 to Thr-26 is G1. Position 19 to 26 (Gly-19 to Thr-26) interacts with GTP. A Mg(2+)-binding site is contributed by Thr-26. Residues Gly-55–Ser-59 are G2. The segment at Asp-76–Gly-79 is G3. GTP-binding positions include Asp-76–His-80 and Asn-131–Asp-134. Positions Asn-131–Asp-134 are G4. The tract at residues Ser-169–Leu-171 is G5.

This sequence belongs to the TRAFAC class translation factor GTPase superfamily. Classic translation factor GTPase family. EF-Tu/EF-1A subfamily. In terms of assembly, monomer.

The protein localises to the cytoplasm. The enzyme catalyses GTP + H2O = GDP + phosphate + H(+). GTP hydrolase that promotes the GTP-dependent binding of aminoacyl-tRNA to the A-site of ribosomes during protein biosynthesis. This chain is Elongation factor Tu 2, found in Bartonella quintana (strain Toulouse) (Rochalimaea quintana).